Here is a 505-residue protein sequence, read N- to C-terminus: Histidine ammonia-lyase (505 aa).

The segment at residues 141 to 143 is a cross-link (5-imidazolinone (Ala-Gly)); sequence ASG. The residue at position 142 (Ser-142) is a 2,3-didehydroalanine (Ser).

This sequence belongs to the PAL/histidase family. Post-translationally, contains an active site 4-methylidene-imidazol-5-one (MIO), which is formed autocatalytically by cyclization and dehydration of residues Ala-Ser-Gly.

It is found in the cytoplasm. It carries out the reaction L-histidine = trans-urocanate + NH4(+). It participates in amino-acid degradation; L-histidine degradation into L-glutamate; N-formimidoyl-L-glutamate from L-histidine: step 1/3. The sequence is that of Histidine ammonia-lyase from Bacillus thuringiensis subsp. konkukian (strain 97-27).